Reading from the N-terminus, the 363-residue chain is Chorismate synthase (363 aa).

2 residues coordinate NADP(+): Arg-48 and Arg-54. FMN is bound by residues 131 to 133, 244 to 245, Gly-288, 303 to 307, and Arg-329; these read RSS, NA, and KPTSS.

The protein belongs to the chorismate synthase family. In terms of assembly, homotetramer. Requires FMNH2 as cofactor.

The catalysed reaction is 5-O-(1-carboxyvinyl)-3-phosphoshikimate = chorismate + phosphate. Its pathway is metabolic intermediate biosynthesis; chorismate biosynthesis; chorismate from D-erythrose 4-phosphate and phosphoenolpyruvate: step 7/7. Its function is as follows. Catalyzes the anti-1,4-elimination of the C-3 phosphate and the C-6 proR hydrogen from 5-enolpyruvylshikimate-3-phosphate (EPSP) to yield chorismate, which is the branch point compound that serves as the starting substrate for the three terminal pathways of aromatic amino acid biosynthesis. This reaction introduces a second double bond into the aromatic ring system. The chain is Chorismate synthase from Hyphomonas neptunium (strain ATCC 15444).